The chain runs to 1008 residues: Collagen alpha-2(I) chain (1008 aa).

Positions 1–999 are disordered; sequence GGFDFSFLPQ…IRGSGGGYDF (999 aa). P9, P12, P45, and P51 each carry 4-hydroxyproline. A compositionally biased stretch (low complexity) spans 38–81; that stretch reads LMGPRGPPGASGAPGPQGFPAGEPGEPGQTGPAGARGPAGPPGK. Residues 82 to 94 show a composition bias toward basic and acidic residues; the sequence is ADGHPGKPGRPGE. Position 116 is a 5-hydroxylysine; alternate (K116). O-linked (Gal...) hydroxylysine; alternate glycosylation occurs at K116. Low complexity-rich tracts occupy residues 164 to 193, 239 to 260, and 301 to 314; these read VGAP…SAGP, PGAN…AGAP, and EPGS…PGSS. The segment covering 336-345 has biased composition (gly residues); that stretch reads GLRGGPGSRG. Over residues 358 to 374 the composition is skewed to low complexity; that stretch reads PAGARGASGPAGVRGPS. A 4-hydroxyproline mark is found at P380 and P383. Low complexity predominate over residues 409–428; that stretch reads LPGIDGRPGPIGPAGARGEA. A compositionally biased stretch (gly residues) spans 455–466; it reads GNRGQGGKGEQG. 2 stretches are compositionally biased toward low complexity: residues 513–530 and 542–552; these read PGES…SRGP and EPGVVGAPGTA. The segment covering 553 to 562 has biased composition (gly residues); the sequence is GPAGSGGLPG. 2 stretches are compositionally biased toward low complexity: residues 582 to 629 and 636 to 656; these read RGEV…PRGS and VGPA…QPGA. Residues 657–666 show a composition bias toward basic and acidic residues; the sequence is KGERGTKGPK. The span at 674-684 shows a compositional bias: low complexity; sequence PTGPVGSAGPA. Over residues 694-703 the composition is skewed to gly residues; it reads GSRGDGGPPG. Residues 704 to 714 are compositionally biased toward low complexity; the sequence is ATGFPGAAGRT. A compositionally biased stretch (gly residues) spans 751 to 760; it reads GETGAGGPPG. Composition is skewed to low complexity over residues 768-795, 803-813, 826-842, 862-884, and 892-907; these read SGEP…LGLP, LPGVAGAVGEP, PPGA…PGNP, YAGN…VGPA, and EPGP…ALGP. Residues 917–928 are compositionally biased toward basic and acidic residues; it reads RGDKGEPGDKGP. Residues 989 to 998 are compositionally biased toward gly residues; sequence GIRGSGGGYD.

Belongs to the fibrillar collagen family. In terms of assembly, trimers of one alpha 2(I) and two alpha 1(I) chains. Interacts (via C-terminus) with TMEM131 (via PapD-L domain); the interaction is direct and is involved in assembly and TRAPPIII ER-to-Golgi transport complex-dependent secretion of collagen. Prolines at the third position of the tripeptide repeating unit (G-X-Y) are hydroxylated in some or all of the chains. In terms of tissue distribution, expressed in bones.

It localises to the secreted. It is found in the extracellular space. Its subcellular location is the extracellular matrix. Functionally, type I collagen is a member of group I collagen (fibrillar forming collagen). This chain is Collagen alpha-2(I) chain, found in Nothrotheriops shastensis (Shasta ground sloth).